The sequence spans 475 residues: Ribulose bisphosphate carboxylase large chain (475 aa).

Residues 1–2 (MS) constitute a propeptide that is removed on maturation. P3 is modified (N-acetylproline). K14 is modified (N6,N6,N6-trimethyllysine). The substrate site is built by N123 and T173. Residue K175 is the Proton acceptor of the active site. K177 is a binding site for substrate. Mg(2+) is bound by residues K201, D203, and E204. The residue at position 201 (K201) is an N6-carboxylysine. H294 serves as the catalytic Proton acceptor. Positions 295, 327, and 379 each coordinate substrate.

This sequence belongs to the RuBisCO large chain family. Type I subfamily. Heterohexadecamer of 8 large chains and 8 small chains; disulfide-linked. The disulfide link is formed within the large subunit homodimers. Requires Mg(2+) as cofactor. In terms of processing, the disulfide bond which can form in the large chain dimeric partners within the hexadecamer appears to be associated with oxidative stress and protein turnover.

The protein localises to the plastid. The protein resides in the chloroplast. It catalyses the reaction 2 (2R)-3-phosphoglycerate + 2 H(+) = D-ribulose 1,5-bisphosphate + CO2 + H2O. It carries out the reaction D-ribulose 1,5-bisphosphate + O2 = 2-phosphoglycolate + (2R)-3-phosphoglycerate + 2 H(+). Its function is as follows. RuBisCO catalyzes two reactions: the carboxylation of D-ribulose 1,5-bisphosphate, the primary event in carbon dioxide fixation, as well as the oxidative fragmentation of the pentose substrate in the photorespiration process. Both reactions occur simultaneously and in competition at the same active site. This chain is Ribulose bisphosphate carboxylase large chain, found in Liquidambar styraciflua (Sweetgum tree).